The primary structure comprises 223 residues: Ribosomal RNA small subunit methyltransferase G (223 aa).

S-adenosyl-L-methionine-binding positions include G82, L87, 133 to 134 (AE), and R151.

This sequence belongs to the methyltransferase superfamily. RNA methyltransferase RsmG family.

It is found in the cytoplasm. In terms of biological role, specifically methylates the N7 position of guanine in position 518 of 16S rRNA. In Corynebacterium glutamicum (strain ATCC 13032 / DSM 20300 / JCM 1318 / BCRC 11384 / CCUG 27702 / LMG 3730 / NBRC 12168 / NCIMB 10025 / NRRL B-2784 / 534), this protein is Ribosomal RNA small subunit methyltransferase G.